We begin with the raw amino-acid sequence, 315 residues long: Protein FRA10AC1 homolog (315 aa).

The residue at position 1 (methionine 1) is an N-acetylmethionine. Residues 1–28 (MHGHGGYDSDFSDDEQGGGSSKKRKKTV) form a disordered region. 2 positions are modified to phosphoserine: serine 9 and serine 12. Residue lysine 36 is modified to N6-acetyllysine. Residues 225–235 (KEIKSTKKRSK) show a composition bias toward basic residues. The tract at residues 225-308 (KEIKSTKKRS…EKSQEEEFDD (84 aa)) is disordered. The segment covering 236 to 245 (TKTESDESPH) has biased composition (basic and acidic residues). 2 positions are modified to phosphoserine: serine 251 and serine 252. Residues 257 to 279 (SQGKDEGHSSSKRSEDSRNRNAG) are compositionally biased toward basic and acidic residues. 2 positions are modified to phosphoserine: serine 283 and serine 285.

Interacts with ESS2.

The protein localises to the nucleus. In terms of biological role, may be involved in pre-mRNA splicing. In Rattus norvegicus (Rat), this protein is Protein FRA10AC1 homolog (Fra10ac1).